A 117-amino-acid chain; its full sequence is Large ribosomal subunit protein bL19 (117 aa).

It belongs to the bacterial ribosomal protein bL19 family.

In terms of biological role, this protein is located at the 30S-50S ribosomal subunit interface and may play a role in the structure and function of the aminoacyl-tRNA binding site. This Bacteroides fragilis (strain ATCC 25285 / DSM 2151 / CCUG 4856 / JCM 11019 / LMG 10263 / NCTC 9343 / Onslow / VPI 2553 / EN-2) protein is Large ribosomal subunit protein bL19.